The chain runs to 267 residues: Tryptophan synthase alpha chain (267 aa).

Residues Glu-49 and Asp-60 each act as proton acceptor in the active site.

The protein belongs to the TrpA family. In terms of assembly, tetramer of two alpha and two beta chains.

The catalysed reaction is (1S,2R)-1-C-(indol-3-yl)glycerol 3-phosphate + L-serine = D-glyceraldehyde 3-phosphate + L-tryptophan + H2O. Its pathway is amino-acid biosynthesis; L-tryptophan biosynthesis; L-tryptophan from chorismate: step 5/5. Its function is as follows. The alpha subunit is responsible for the aldol cleavage of indoleglycerol phosphate to indole and glyceraldehyde 3-phosphate. In Carboxydothermus hydrogenoformans (strain ATCC BAA-161 / DSM 6008 / Z-2901), this protein is Tryptophan synthase alpha chain.